Reading from the N-terminus, the 228-residue chain is NAD(P)H-hydrate epimerase (228 aa).

Residues 9–214 (AQNIDQELFN…DLLLKKYELE (206 aa)) enclose the YjeF N-terminal domain. 60–64 (NNGGD) is a binding site for (6S)-NADPHX. Positions 61 and 125 each coordinate K(+). (6S)-NADPHX is bound by residues 129–135 (GFSFKGE) and Asp-158. Residue Ser-161 participates in K(+) binding.

It belongs to the NnrE/AIBP family. Requires K(+) as cofactor.

It carries out the reaction (6R)-NADHX = (6S)-NADHX. The enzyme catalyses (6R)-NADPHX = (6S)-NADPHX. Its function is as follows. Catalyzes the epimerization of the S- and R-forms of NAD(P)HX, a damaged form of NAD(P)H that is a result of enzymatic or heat-dependent hydration. This is a prerequisite for the S-specific NAD(P)H-hydrate dehydratase to allow the repair of both epimers of NAD(P)HX. The chain is NAD(P)H-hydrate epimerase from Nematostella vectensis (Starlet sea anemone).